Here is a 463-residue protein sequence, read N- to C-terminus: Hydroxyacid-oxoacid transhydrogenase, mitochondrial (463 aa).

This sequence belongs to the iron-containing alcohol dehydrogenase family. Hydroxyacid-oxoacid transhydrogenase subfamily.

The protein localises to the mitochondrion. It carries out the reaction (S)-3-hydroxybutanoate + 2-oxoglutarate = (R)-2-hydroxyglutarate + acetoacetate. The catalysed reaction is 4-hydroxybutanoate + 2-oxoglutarate = (R)-2-hydroxyglutarate + succinate semialdehyde. In terms of biological role, catalyzes the cofactor-independent reversible oxidation of gamma-hydroxybutyrate (GHB) to succinic semialdehyde (SSA) coupled to reduction of 2-ketoglutarate (2-KG) to D-2-hydroxyglutarate (D-2-HG). L-3-hydroxybutyrate (L-3-OHB) is also a substrate for HOT when using 2-KG as hydrogen acceptor, resulting in the formation of D-2-HG. The chain is Hydroxyacid-oxoacid transhydrogenase, mitochondrial (adhfe1) from Xenopus tropicalis (Western clawed frog).